We begin with the raw amino-acid sequence, 349 residues long: MALLRKINQVLLFLLIVTLCVILYKKVHKGTVSKNDADDESETPEELEEEIPVVICAAAGRMGATMAAINSIYSNTDANILFYVVGLRNTLTRIRKWIEHSKLREINFKIVEFNPMVLKGKIRPDSSRPELLQPLNFVRFYLPLLIHQHEKVIYLDDDVIVQGDIHELYDTTLALGHAAAFSDDCDLPSAQDINRLVGLQNTYMGYLDYRKKAIKDLGISPSTCSFNPGVIVANMTEWKHQHITKQLEKWMQKNVEENLYSSSLGGGVATSPMLIVFHGKYSTINPLWHIRHLGWNPDARYSEHFLQEAKLLHWNGRHKPWDFPSVHNDLWESWFVPDPAGIFKLNHHS.

Residues 1–6 (MALLRK) lie on the Cytoplasmic side of the membrane. A helical; Signal-anchor for type II membrane protein membrane pass occupies residues 7–24 (INQVLLFLLIVTLCVILY). The Lumenal segment spans residues 25-349 (KKVHKGTVSK…AGIFKLNHHS (325 aa)). Residue Asn234 is glycosylated (N-linked (GlcNAc...) asparagine).

Belongs to the glycosyltransferase 8 family.

It localises to the membrane. This is Glycosyltransferase 8 domain-containing protein 2 (GLT8D2) from Macaca fascicularis (Crab-eating macaque).